Reading from the N-terminus, the 962-residue chain is DNA primase (962 aa).

A CHC2-type zinc finger spans residues 894–932 (CLRARHARSPPARTFVALSVDAHDRLCISLSQQCFATKC).

The protein belongs to the herpesviridae DNA primase family. Associates with the helicase and the primase-associated factor to form the helicase-primase factor.

It is found in the host nucleus. Functionally, essential component of the helicase/primase complex. Unwinds the DNA at the replication forks and generates single-stranded DNA for both leading and lagging strand synthesis. The primase initiates primer synthesis and thereby produces large amount of short RNA primers on the lagging strand that the polymerase elongates using dNTPs. The polypeptide is DNA primase (UL52) (Sus scrofa (Pig)).